Here is a 105-residue protein sequence, read N- to C-terminus: Cell division protein FtsB (105 aa).

Topologically, residues M1–I3 are cytoplasmic. Residues V4–L21 traverse the membrane as a helical segment. The Periplasmic segment spans residues G22–Q105. A coiled-coil region spans residues M32–L60.

The protein belongs to the FtsB family. As to quaternary structure, part of a complex composed of FtsB, FtsL and FtsQ.

The protein localises to the cell inner membrane. In terms of biological role, essential cell division protein. May link together the upstream cell division proteins, which are predominantly cytoplasmic, with the downstream cell division proteins, which are predominantly periplasmic. This is Cell division protein FtsB from Polynucleobacter asymbioticus (strain DSM 18221 / CIP 109841 / QLW-P1DMWA-1) (Polynucleobacter necessarius subsp. asymbioticus).